The chain runs to 103 residues: Co-chaperonin GroES (103 aa).

It belongs to the GroES chaperonin family. As to quaternary structure, heptamer of 7 subunits arranged in a ring. Interacts with the chaperonin GroEL.

Its subcellular location is the cytoplasm. In terms of biological role, together with the chaperonin GroEL, plays an essential role in assisting protein folding. The GroEL-GroES system forms a nano-cage that allows encapsulation of the non-native substrate proteins and provides a physical environment optimized to promote and accelerate protein folding. GroES binds to the apical surface of the GroEL ring, thereby capping the opening of the GroEL channel. In Nostoc sp. (strain PCC 7120 / SAG 25.82 / UTEX 2576), this protein is Co-chaperonin GroES.